The primary structure comprises 424 residues: GTPase Obg (424 aa).

The 158-residue stretch at 1–158 (MFYDQAKIYV…RNLLLELKLL (158 aa)) folds into the Obg domain. An OBG-type G domain is found at 159 to 329 (ADVGLVGFPN…LVYAAAKALP (171 aa)). GTP-binding positions include 165-172 (GFPNVGKS), 190-194 (FTTLV), 212-215 (DIPG), 282-285 (NKMD), and 310-312 (SAA). 2 residues coordinate Mg(2+): S172 and T192. An OCT domain is found at 347–424 (TQASAPHRFE…IAGIEFEWEE (78 aa)).

Belongs to the TRAFAC class OBG-HflX-like GTPase superfamily. OBG GTPase family. Monomer. Mg(2+) serves as cofactor.

The protein localises to the cytoplasm. An essential GTPase which binds GTP, GDP and possibly (p)ppGpp with moderate affinity, with high nucleotide exchange rates and a fairly low GTP hydrolysis rate. Plays a role in control of the cell cycle, stress response, ribosome biogenesis and in those bacteria that undergo differentiation, in morphogenesis control. In Desulfitobacterium hafniense (strain Y51), this protein is GTPase Obg.